A 461-amino-acid chain; its full sequence is Bifunctional protein HldE (461 aa).

The tract at residues 1–315 is ribokinase; it reads MKKILVIGDL…LILNQTHPKI (315 aa). Residue 191–194 participates in ATP binding; sequence NRTE. The active site involves Asp260. Positions 332 to 461 are cytidylyltransferase; that stretch reads FTNGCFDLLH…IEKIKRTCND (130 aa).

In the N-terminal section; belongs to the carbohydrate kinase PfkB family. This sequence in the C-terminal section; belongs to the cytidylyltransferase family. As to quaternary structure, homodimer.

It carries out the reaction D-glycero-beta-D-manno-heptose 7-phosphate + ATP = D-glycero-beta-D-manno-heptose 1,7-bisphosphate + ADP + H(+). The catalysed reaction is D-glycero-beta-D-manno-heptose 1-phosphate + ATP + H(+) = ADP-D-glycero-beta-D-manno-heptose + diphosphate. It functions in the pathway nucleotide-sugar biosynthesis; ADP-L-glycero-beta-D-manno-heptose biosynthesis; ADP-L-glycero-beta-D-manno-heptose from D-glycero-beta-D-manno-heptose 7-phosphate: step 1/4. It participates in nucleotide-sugar biosynthesis; ADP-L-glycero-beta-D-manno-heptose biosynthesis; ADP-L-glycero-beta-D-manno-heptose from D-glycero-beta-D-manno-heptose 7-phosphate: step 3/4. Its pathway is bacterial outer membrane biogenesis; LPS core biosynthesis. Its function is as follows. Catalyzes the phosphorylation of D-glycero-D-manno-heptose 7-phosphate at the C-1 position to selectively form D-glycero-beta-D-manno-heptose-1,7-bisphosphate. Catalyzes the ADP transfer from ATP to D-glycero-beta-D-manno-heptose 1-phosphate, yielding ADP-D-glycero-beta-D-manno-heptose. The polypeptide is Bifunctional protein HldE (Helicobacter pylori (strain ATCC 700392 / 26695) (Campylobacter pylori)).